The primary structure comprises 101 residues: Large ribosomal subunit protein uL23 (101 aa).

Belongs to the universal ribosomal protein uL23 family. As to quaternary structure, part of the 50S ribosomal subunit. Contacts protein L29, and trigger factor when it is bound to the ribosome.

Functionally, one of the early assembly proteins it binds 23S rRNA. One of the proteins that surrounds the polypeptide exit tunnel on the outside of the ribosome. Forms the main docking site for trigger factor binding to the ribosome. This Azoarcus sp. (strain BH72) protein is Large ribosomal subunit protein uL23.